The sequence spans 350 residues: Small ribosomal subunit biogenesis GTPase RsgA (350 aa).

Over residues 1 to 17 the composition is skewed to polar residues; it reads MSKNKLSKGQQRRVNAN. Residues 1 to 33 form a disordered region; sequence MSKNKLSKGQQRRVNANHQRRLKTSKEKPDYDD. In terms of domain architecture, CP-type G spans 104–273; that stretch reads TSVLTRPDFY…VIDSPGVREF (170 aa). GTP contacts are provided by residues 160 to 163 and 214 to 222; these read NKID and GQSGVGKSS. 4 residues coordinate Zn(2+): cysteine 297, cysteine 302, histidine 304, and cysteine 310.

This sequence belongs to the TRAFAC class YlqF/YawG GTPase family. RsgA subfamily. Monomer. Associates with 30S ribosomal subunit, binds 16S rRNA. It depends on Zn(2+) as a cofactor.

Its subcellular location is the cytoplasm. Functionally, one of several proteins that assist in the late maturation steps of the functional core of the 30S ribosomal subunit. Helps release RbfA from mature subunits. May play a role in the assembly of ribosomal proteins into the subunit. Circularly permuted GTPase that catalyzes slow GTP hydrolysis, GTPase activity is stimulated by the 30S ribosomal subunit. This is Small ribosomal subunit biogenesis GTPase RsgA from Escherichia coli (strain ATCC 8739 / DSM 1576 / NBRC 3972 / NCIMB 8545 / WDCM 00012 / Crooks).